A 201-amino-acid chain; its full sequence is 3-isopropylmalate dehydratase small subunit (201 aa).

It belongs to the LeuD family. LeuD type 1 subfamily. Heterodimer of LeuC and LeuD.

It carries out the reaction (2R,3S)-3-isopropylmalate = (2S)-2-isopropylmalate. The protein operates within amino-acid biosynthesis; L-leucine biosynthesis; L-leucine from 3-methyl-2-oxobutanoate: step 2/4. Catalyzes the isomerization between 2-isopropylmalate and 3-isopropylmalate, via the formation of 2-isopropylmaleate. In Kineococcus radiotolerans (strain ATCC BAA-149 / DSM 14245 / SRS30216), this protein is 3-isopropylmalate dehydratase small subunit.